Consider the following 421-residue polypeptide: L-Ala-D/L-amino acid epimerase (421 aa).

Residues T193 and K218–K220 contribute to the substrate site. D247, E275, and D304 together coordinate Mg(2+). Residues K328 and D380–D382 contribute to the substrate site.

It belongs to the mandelate racemase/muconate lactonizing enzyme family. Mg(2+) serves as cofactor.

In terms of biological role, catalyzes the epimerization of various hydrophobic and polar dipeptides. Has epimerase activity with L-Ala-L-Ala, L-Ala-L-Ser, L-Ala-L-Thr and L-Ala-L-Trp (in vitro). The chain is L-Ala-D/L-amino acid epimerase from Populus trichocarpa (Western balsam poplar).